The primary structure comprises 281 residues: 4-hydroxy-3-methylbut-2-enyl diphosphate reductase (281 aa).

Position 12 (cysteine 12) interacts with [4Fe-4S] cluster. Positions 41 and 74 each coordinate (2E)-4-hydroxy-3-methylbut-2-enyl diphosphate. Dimethylallyl diphosphate-binding residues include histidine 41 and histidine 74. Isopentenyl diphosphate is bound by residues histidine 41 and histidine 74. Cysteine 96 is a [4Fe-4S] cluster binding site. Residue histidine 124 participates in (2E)-4-hydroxy-3-methylbut-2-enyl diphosphate binding. Histidine 124 serves as a coordination point for dimethylallyl diphosphate. Histidine 124 provides a ligand contact to isopentenyl diphosphate. The active-site Proton donor is glutamate 126. Threonine 164 is a binding site for (2E)-4-hydroxy-3-methylbut-2-enyl diphosphate. Cysteine 193 contacts [4Fe-4S] cluster. (2E)-4-hydroxy-3-methylbut-2-enyl diphosphate is bound by residues serine 221, asparagine 223, and serine 265. Residues serine 221, asparagine 223, and serine 265 each contribute to the dimethylallyl diphosphate site. Isopentenyl diphosphate is bound by residues serine 221, asparagine 223, and serine 265.

Belongs to the IspH family. [4Fe-4S] cluster serves as cofactor.

The enzyme catalyses isopentenyl diphosphate + 2 oxidized [2Fe-2S]-[ferredoxin] + H2O = (2E)-4-hydroxy-3-methylbut-2-enyl diphosphate + 2 reduced [2Fe-2S]-[ferredoxin] + 2 H(+). It catalyses the reaction dimethylallyl diphosphate + 2 oxidized [2Fe-2S]-[ferredoxin] + H2O = (2E)-4-hydroxy-3-methylbut-2-enyl diphosphate + 2 reduced [2Fe-2S]-[ferredoxin] + 2 H(+). It functions in the pathway isoprenoid biosynthesis; dimethylallyl diphosphate biosynthesis; dimethylallyl diphosphate from (2E)-4-hydroxy-3-methylbutenyl diphosphate: step 1/1. It participates in isoprenoid biosynthesis; isopentenyl diphosphate biosynthesis via DXP pathway; isopentenyl diphosphate from 1-deoxy-D-xylulose 5-phosphate: step 6/6. Its function is as follows. Catalyzes the conversion of 1-hydroxy-2-methyl-2-(E)-butenyl 4-diphosphate (HMBPP) into a mixture of isopentenyl diphosphate (IPP) and dimethylallyl diphosphate (DMAPP). Acts in the terminal step of the DOXP/MEP pathway for isoprenoid precursor biosynthesis. This chain is 4-hydroxy-3-methylbut-2-enyl diphosphate reductase, found in Nitratidesulfovibrio vulgaris (strain DSM 19637 / Miyazaki F) (Desulfovibrio vulgaris).